A 117-amino-acid polypeptide reads, in one-letter code: NADH-ubiquinone oxidoreductase chain 3 (117 aa).

3 consecutive transmembrane segments (helical) span residues 6 to 26 (ILIL…ASYI), 58 to 78 (FFLI…LFPW), and 85 to 105 (LPLF…LGLI).

Belongs to the complex I subunit 3 family.

The protein localises to the mitochondrion membrane. It carries out the reaction a ubiquinone + NADH + 5 H(+)(in) = a ubiquinol + NAD(+) + 4 H(+)(out). Core subunit of the mitochondrial membrane respiratory chain NADH dehydrogenase (Complex I) that is believed to belong to the minimal assembly required for catalysis. Complex I functions in the transfer of electrons from NADH to the respiratory chain. The immediate electron acceptor for the enzyme is believed to be ubiquinone. This chain is NADH-ubiquinone oxidoreductase chain 3 (ND3), found in Sarcophyton glaucum (Toadstool umbrella leather coral).